Consider the following 331-residue polypeptide: 6-phosphogluconolactonase (331 aa).

Position 287 is an N6-acetyllysine (Lys-287).

The protein belongs to the cycloisomerase 2 family.

The enzyme catalyses 6-phospho-D-glucono-1,5-lactone + H2O = 6-phospho-D-gluconate + H(+). The protein operates within carbohydrate degradation; pentose phosphate pathway; D-ribulose 5-phosphate from D-glucose 6-phosphate (oxidative stage): step 2/3. Catalyzes the hydrolysis of 6-phosphogluconolactone to 6-phosphogluconate. The sequence is that of 6-phosphogluconolactonase from Escherichia coli O127:H6 (strain E2348/69 / EPEC).